Reading from the N-terminus, the 225-residue chain is Uracil-DNA glycosylase (225 aa).

Residue Asp65 is the Proton acceptor of the active site.

This sequence belongs to the uracil-DNA glycosylase (UDG) superfamily. UNG family.

The protein resides in the cytoplasm. The catalysed reaction is Hydrolyzes single-stranded DNA or mismatched double-stranded DNA and polynucleotides, releasing free uracil.. Functionally, excises uracil residues from the DNA which can arise as a result of misincorporation of dUMP residues by DNA polymerase or due to deamination of cytosine. This is Uracil-DNA glycosylase from Clostridium perfringens (strain SM101 / Type A).